A 910-amino-acid chain; its full sequence is DNA mismatch repair protein MutS (910 aa).

658 to 665 is a binding site for ATP; sequence GPNMGGKS.

It belongs to the DNA mismatch repair MutS family.

Its function is as follows. This protein is involved in the repair of mismatches in DNA. It is possible that it carries out the mismatch recognition step. This protein has a weak ATPase activity. In Brucella anthropi (strain ATCC 49188 / DSM 6882 / CCUG 24695 / JCM 21032 / LMG 3331 / NBRC 15819 / NCTC 12168 / Alc 37) (Ochrobactrum anthropi), this protein is DNA mismatch repair protein MutS.